Reading from the N-terminus, the 125-residue chain is Small ribosomal subunit protein bS6 (125 aa).

A disordered region spans residues Pro99–Gln125. The segment covering Ser105 to Ser115 has biased composition (basic and acidic residues). The segment covering Thr116–Gln125 has biased composition (polar residues).

The protein belongs to the bacterial ribosomal protein bS6 family.

Functionally, binds together with bS18 to 16S ribosomal RNA. In Bordetella petrii (strain ATCC BAA-461 / DSM 12804 / CCUG 43448), this protein is Small ribosomal subunit protein bS6.